The sequence spans 150 residues: Small ribosomal subunit protein uS15 (150 aa).

Residues 1 to 10 (MPHRSRHKRG) show a composition bias toward basic residues. Positions 1 to 21 (MPHRSRHKRGSSGSVRPATKT) are disordered.

It belongs to the universal ribosomal protein uS15 family. Part of the 30S ribosomal subunit.

In Caldivirga maquilingensis (strain ATCC 700844 / DSM 13496 / JCM 10307 / IC-167), this protein is Small ribosomal subunit protein uS15.